The following is a 416-amino-acid chain: Calreticulin (416 aa).

Asparagine 54 carries N-linked (GlcNAc...) asparagine glycosylation. The cysteines at positions 108 and 140 are disulfide-linked. Residues tyrosine 112, lysine 114, tyrosine 131, and aspartate 138 each coordinate an alpha-D-glucoside. Repeat copies occupy residues 194–205 (KQSGSVYTDWDI), 213–224 (DPEAKKPEDWED), 230–241 (DPEDKKPEGYDD), 248–259 (DPEAKKPEDWDD), 263–273 (GEWTAPTIPNP), 277–287 (GEWKPKKIKNP), and 291–301 (GKWKAPMIDNP). Residues 194–259 (KQSGSVYTDW…EAKKPEDWDD (66 aa)) form a 4 X approximate repeats region. A disordered region spans residues 209 to 281 (KQIKDPEAKK…NPDYKGEWKP (73 aa)). Residues 210–255 (QIKDPEAKKPEDWEDKEYIPDPEDKKPEGYDDIPKEITDPEAKKPE) are compositionally biased toward basic and acidic residues. Positions 263–301 (GEWTAPTIPNPDYKGEWKPKKIKNPNFKGKWKAPMIDNP) are 3 X approximate repeats. Glutamate 321 is an an alpha-D-glucoside binding site. Positions 349-378 (ETWGKNKDAEKAAFDEAEKKKEEEEAKDDP) are enriched in basic and acidic residues. Positions 349 to 416 (ETWGKNKDAE…EDDEDVHDEL (68 aa)) are disordered. Residues 379 to 416 (TESDDEKPDEEGESDGEGDDESKDIDNEEDDEDVHDEL) show a composition bias toward acidic residues. The Prevents secretion from ER signature appears at 413–416 (HDEL).

This sequence belongs to the calreticulin family.

Its subcellular location is the endoplasmic reticulum lumen. Its function is as follows. Molecular calcium-binding chaperone promoting folding, oligomeric assembly and quality control in the ER via the calreticulin/calnexin cycle. This lectin may interact transiently with almost all of the monoglucosylated glycoproteins that are synthesized in the ER. The sequence is that of Calreticulin from Berberis stolonifera (Barberry).